Here is a 379-residue protein sequence, read N- to C-terminus: Queuine tRNA-ribosyltransferase (379 aa).

Asp93 serves as the catalytic Proton acceptor. Residues Asp93–Phe97, Asp147, Gln191, and Gly218 contribute to the substrate site. The RNA binding stretch occupies residues Gly249–Asp255. The active-site Nucleophile is Asp268. Residues Thr273–Arg277 are RNA binding; important for wobble base 34 recognition. The Zn(2+) site is built by Cys306, Cys308, Cys311, and His337.

The protein belongs to the queuine tRNA-ribosyltransferase family. In terms of assembly, homodimer. Within each dimer, one monomer is responsible for RNA recognition and catalysis, while the other monomer binds to the replacement base PreQ1. Requires Zn(2+) as cofactor.

The catalysed reaction is 7-aminomethyl-7-carbaguanine + guanosine(34) in tRNA = 7-aminomethyl-7-carbaguanosine(34) in tRNA + guanine. It participates in tRNA modification; tRNA-queuosine biosynthesis. In terms of biological role, catalyzes the base-exchange of a guanine (G) residue with the queuine precursor 7-aminomethyl-7-deazaguanine (PreQ1) at position 34 (anticodon wobble position) in tRNAs with GU(N) anticodons (tRNA-Asp, -Asn, -His and -Tyr). Catalysis occurs through a double-displacement mechanism. The nucleophile active site attacks the C1' of nucleotide 34 to detach the guanine base from the RNA, forming a covalent enzyme-RNA intermediate. The proton acceptor active site deprotonates the incoming PreQ1, allowing a nucleophilic attack on the C1' of the ribose to form the product. After dissociation, two additional enzymatic reactions on the tRNA convert PreQ1 to queuine (Q), resulting in the hypermodified nucleoside queuosine (7-(((4,5-cis-dihydroxy-2-cyclopenten-1-yl)amino)methyl)-7-deazaguanosine). In Mannheimia succiniciproducens (strain KCTC 0769BP / MBEL55E), this protein is Queuine tRNA-ribosyltransferase.